The following is a 110-amino-acid chain: Cytochrome c (110 aa).

Residues Cys21, Cys24, His25, and Met87 each coordinate heme c.

The protein belongs to the cytochrome c family. Binds 1 heme c group covalently per subunit.

The protein localises to the mitochondrion intermembrane space. In terms of biological role, electron carrier protein. The oxidized form of the cytochrome c heme group can accept an electron from the heme group of the cytochrome c1 subunit of cytochrome reductase. Cytochrome c then transfers this electron to the cytochrome oxidase complex, the final protein carrier in the mitochondrial electron-transport chain. The sequence is that of Cytochrome c (CYCK) from Kluyveromyces lactis (strain ATCC 8585 / CBS 2359 / DSM 70799 / NBRC 1267 / NRRL Y-1140 / WM37) (Yeast).